The following is a 362-amino-acid chain: tRNA/tmRNA (uracil-C(5))-methyltransferase (362 aa).

Residues Gln186, Tyr214, Asn219, Glu235, and Asp295 each coordinate S-adenosyl-L-methionine. The active-site Nucleophile is Cys320. Residue Glu354 is the Proton acceptor of the active site.

It belongs to the class I-like SAM-binding methyltransferase superfamily. RNA M5U methyltransferase family. TrmA subfamily.

The catalysed reaction is uridine(54) in tRNA + S-adenosyl-L-methionine = 5-methyluridine(54) in tRNA + S-adenosyl-L-homocysteine + H(+). It catalyses the reaction uridine(341) in tmRNA + S-adenosyl-L-methionine = 5-methyluridine(341) in tmRNA + S-adenosyl-L-homocysteine + H(+). Its function is as follows. Dual-specificity methyltransferase that catalyzes the formation of 5-methyluridine at position 54 (m5U54) in all tRNAs, and that of position 341 (m5U341) in tmRNA (transfer-mRNA). This chain is tRNA/tmRNA (uracil-C(5))-methyltransferase, found in Dechloromonas aromatica (strain RCB).